The following is a 967-amino-acid chain: A disintegrin and metalloproteinase with thrombospondin motifs 1 (967 aa).

Residues 1 to 54 (MQPEVPLGSGKLKPCSDMGDIQRAAKFRSSQSAHMLLLLLASITMLLCVRGAHG) form the signal peptide. Positions 55 to 252 (RPTEEDEELV…TGPGSIRKKR (198 aa)) are excised as a propeptide. Residues 198–252 (RGSGGAKCGVMDEETLPTSNSGRESQNTPDQWPLRNPTPQGAGKPTGPGSIRKKR) form a disordered region. Positions 203-210 (AKCGVMDE) match the Cysteine switch motif. A Zn(2+)-binding site is contributed by cysteine 205. The span at 213-227 (LPTSNSGRESQNTPD) shows a compositional bias: polar residues. The region spanning 258-467 (RYVETMLVAD…GHGECLMDKP (210 aa)) is the Peptidase M12B domain. 3 residues coordinate Ca(2+): glutamate 261, aspartate 344, and aspartate 351. 4 disulfides stabilise this stretch: cysteine 333-cysteine 385, cysteine 362-cysteine 367, cysteine 379-cysteine 462, and cysteine 417-cysteine 446. Histidine 401 is a Zn(2+) binding site. Glutamate 402 is an active-site residue. The Zn(2+) site is built by histidine 405 and histidine 411. The Ca(2+) site is built by cysteine 462 and aspartate 465. Residues 476–558 (DLPGTLYDAN…TDMKHFATPV (83 aa)) enclose the Disintegrin domain. 4 disulfide bridges follow: cysteine 488-cysteine 511, cysteine 499-cysteine 521, cysteine 506-cysteine 540, and cysteine 534-cysteine 545. Asparagine 547 is a glycosylation site (N-linked (GlcNAc...) asparagine). Positions 559-614 (HGSWGPWGPWGDCSRTCGGGVQYTMRECDNPVPKNGGKYCEGKRVRYRSCNIEDCP) constitute a TSP type-1 1 domain. 3 disulfide bridges follow: cysteine 571-cysteine 608, cysteine 575-cysteine 613, and cysteine 586-cysteine 598. Residues asparagine 720, asparagine 764, and asparagine 782 are each glycosylated (N-linked (GlcNAc...) asparagine). Positions 725–857 (KKISGTVTST…PFNAIPTFSE (133 aa)) are spacer. TSP type-1 domains are found at residues 854–910 (TFSE…LPCP) and 911–967 (RWQV…TQCS). An N-linked (GlcNAc...) asparagine glycan is attached at asparagine 945.

The cofactor is Zn(2+). The precursor is cleaved by a furin endopeptidase. Post-translationally, glycosylated. Can be O-fucosylated by POFUT2 on a serine or a threonine residue found within the consensus sequence C1-X(2)-(S/T)-C2-G of the TSP type-1 repeat domains where C1 and C2 are the first and second cysteine residue of the repeat, respectively. Fucosylated repeats can then be further glycosylated by the addition of a beta-1,3-glucose residue by the glucosyltransferase, B3GALTL. Fucosylation mediates the efficient secretion of ADAMTS family members. Can also be C-glycosylated with one or two mannose molecules on tryptophan residues within the consensus sequence W-X-X-W of the TPRs, and N-glycosylated. These other glycosylations can also facilitate secretion.

The protein localises to the secreted. It is found in the extracellular space. Its subcellular location is the extracellular matrix. Its function is as follows. Metalloprotease which cleaves aggrecan, a cartilage proteoglycan, at the '1683-Glu-|-Leu-1684' site (within the chondroitin sulfate attachment domain), and may be involved in its turnover. Also cleaves COMP. Has angiogenic inhibitor activity. May play a critical role in follicular rupture. The sequence is that of A disintegrin and metalloproteinase with thrombospondin motifs 1 (Adamts1) from Rattus norvegicus (Rat).